The primary structure comprises 403 residues: Tyrosine--tRNA ligase (403 aa).

The 'HIGH' region signature appears at 42-51; that stretch reads PTAPDLHLGH. A 'KMSKS' region motif is present at residues 226–230; sequence KMSKS. Residue Lys-229 participates in ATP binding. Residues 339 to 400 enclose the S4 RNA-binding domain; it reads LRLAGLLTAA…GKRNFARVSL (62 aa).

This sequence belongs to the class-I aminoacyl-tRNA synthetase family. TyrS type 2 subfamily. In terms of assembly, homodimer.

The protein resides in the cytoplasm. It carries out the reaction tRNA(Tyr) + L-tyrosine + ATP = L-tyrosyl-tRNA(Tyr) + AMP + diphosphate + H(+). Catalyzes the attachment of tyrosine to tRNA(Tyr) in a two-step reaction: tyrosine is first activated by ATP to form Tyr-AMP and then transferred to the acceptor end of tRNA(Tyr). The protein is Tyrosine--tRNA ligase of Xanthomonas axonopodis pv. citri (strain 306).